A 78-amino-acid chain; its full sequence is Probable Vpr-like protein (78 aa).

Positions Ala-35–Phe-43 match the Nuclear export signal motif. The Nuclear localization signal motif lies at Arg-45–Asp-54.

The protein localises to the virion. It localises to the host nucleus. In terms of biological role, seems to function as a Vpr-like protein, since it mediates host cell cycle arrest in G2 phase. Cell cycle arrest creates a favorable environment for maximizing viral expression and production. The polypeptide is Probable Vpr-like protein (Feline immunodeficiency virus (isolate Petaluma) (FIV)).